The sequence spans 320 residues: NADH-ubiquinone oxidoreductase chain 1 (320 aa).

Helical transmembrane passes span 3 to 23 (LITI…VAFL), 72 to 92 (ILLI…WTPI), 103 to 123 (LGFL…LWAG), 147 to 167 (VTLG…TMQL), 174 to 194 (HIWL…STLA), 226 to 246 (FFLA…ILFI), 255 to 275 (ELFL…FLWI), and 295 to 315 (FLPL…SISG).

This sequence belongs to the complex I subunit 1 family.

The protein resides in the mitochondrion inner membrane. The catalysed reaction is a ubiquinone + NADH + 5 H(+)(in) = a ubiquinol + NAD(+) + 4 H(+)(out). Core subunit of the mitochondrial membrane respiratory chain NADH dehydrogenase (Complex I) that is believed to belong to the minimal assembly required for catalysis. Complex I functions in the transfer of electrons from NADH to the respiratory chain. The immediate electron acceptor for the enzyme is believed to be ubiquinone. This chain is NADH-ubiquinone oxidoreductase chain 1 (MT-ND1), found in Varanus jobiensis (Peach throat monitor).